The chain runs to 179 residues: Large ribosomal subunit protein uL15 (179 aa).

This sequence belongs to the universal ribosomal protein uL15 family. Part of the 50S ribosomal subunit.

Functionally, binds to the 23S rRNA. This Archaeoglobus fulgidus (strain ATCC 49558 / DSM 4304 / JCM 9628 / NBRC 100126 / VC-16) protein is Large ribosomal subunit protein uL15.